The primary structure comprises 216 residues: Probable nicotinate-nucleotide adenylyltransferase (216 aa).

This sequence belongs to the NadD family.

The catalysed reaction is nicotinate beta-D-ribonucleotide + ATP + H(+) = deamido-NAD(+) + diphosphate. It functions in the pathway cofactor biosynthesis; NAD(+) biosynthesis; deamido-NAD(+) from nicotinate D-ribonucleotide: step 1/1. Functionally, catalyzes the reversible adenylation of nicotinate mononucleotide (NaMN) to nicotinic acid adenine dinucleotide (NaAD). The polypeptide is Probable nicotinate-nucleotide adenylyltransferase (Klebsiella pneumoniae subsp. pneumoniae (strain ATCC 700721 / MGH 78578)).